Consider the following 207-residue polypeptide: V-type ATP synthase subunit D (207 aa).

This sequence belongs to the V-ATPase D subunit family.

In terms of biological role, produces ATP from ADP in the presence of a proton gradient across the membrane. This Streptococcus gordonii (strain Challis / ATCC 35105 / BCRC 15272 / CH1 / DL1 / V288) protein is V-type ATP synthase subunit D.